Reading from the N-terminus, the 172-residue chain is Zinc finger protein 580 (172 aa).

Residues 1-92 (MLLLPPRPPH…PGEPGPRKGY (92 aa)) are disordered. The segment covering 19–30 (MDPPPPKTPPFP) has biased composition (pro residues). K31 participates in a covalent cross-link: Glycyl lysine isopeptide (Lys-Gly) (interchain with G-Cter in SUMO2). The C2H2-type 1 zinc-finger motif lies at 92–114 (YSCPECARVFASPLRLQSHRVSH). Residue K118 forms a Glycyl lysine isopeptide (Lys-Gly) (interchain with G-Cter in SUMO2) linkage. 2 C2H2-type zinc fingers span residues 120 to 142 (FTCG…RATH) and 150 to 172 (HTCP…VRLH).

Interacts with SMAD2.

The protein localises to the nucleus. Its function is as follows. Involved in the regulation of endothelial cell proliferation and migration. Mediates H(2)O(2)-induced leukocyte chemotaxis by elevating interleukin-8 production and may play a role in inflammation. May be involved in transcriptional regulation. This Mus musculus (Mouse) protein is Zinc finger protein 580 (Znf580).